We begin with the raw amino-acid sequence, 360 residues long: Ubiquitin carboxyl-terminal hydrolase MIY1 (360 aa).

C28 functions as the Nucleophile in the catalytic mechanism. H216 functions as the Proton acceptor in the catalytic mechanism. Residues 317–360 (KRKIHSHKKNSEIHAPVKKDKFKRRSSLLNAKASEKEKSECVVM) form a disordered region. Basic and acidic residues-rich tracts occupy residues 325 to 335 (KNSEIHAPVKK) and 349 to 360 (ASEKEKSECVVM).

Belongs to the MINDY deubiquitinase family. FAM63 subfamily.

It is found in the cytoplasm. The catalysed reaction is Thiol-dependent hydrolysis of ester, thioester, amide, peptide and isopeptide bonds formed by the C-terminal Gly of ubiquitin (a 76-residue protein attached to proteins as an intracellular targeting signal).. In terms of biological role, hydrolase that can specifically remove 'Lys-48'-linked conjugated ubiquitin from proteins. Has endodeubiquitinase activity. The chain is Ubiquitin carboxyl-terminal hydrolase MIY1 from Saccharomyces cerevisiae (strain ATCC 204508 / S288c) (Baker's yeast).